Consider the following 394-residue polypeptide: Sugar efflux transporter C (394 aa).

Residues methionine 1–lysine 10 are Periplasmic-facing. Residues isoleucine 11–alanine 31 traverse the membrane as a helical segment. The Cytoplasmic segment spans residues leucine 32–proline 49. Residues isoleucine 50 to leucine 70 traverse the membrane as a helical segment. The Periplasmic segment spans residues alanine 71 to arginine 80. Residues lysine 81 to asparagine 101 traverse the membrane as a helical segment. At arginine 102–tyrosine 104 the chain is on the cytoplasmic side. The chain crosses the membrane as a helical span at residues phenylalanine 105–methionine 125. Over phenylalanine 126–glutamine 150 the chain is Periplasmic. The chain crosses the membrane as a helical span at residues isoleucine 151–phenylalanine 171. Position 172 (lysine 172) is a topological domain, cytoplasmic. The chain crosses the membrane as a helical span at residues valine 173 to leucine 193. The Periplasmic segment spans residues proline 194–valine 224. A helical transmembrane segment spans residues valine 225 to isoleucine 245. Over aspartate 246 to lysine 253 the chain is Cytoplasmic. A helical membrane pass occupies residues leucine 254–glycine 274. Residues tyrosine 275–arginine 283 lie on the Periplasmic side of the membrane. The helical transmembrane segment at leucine 284 to threonine 304 threads the bilayer. Residues threonine 305–leucine 310 are Cytoplasmic-facing. A helical membrane pass occupies residues glutamate 311–phenylalanine 331. The Periplasmic portion of the chain corresponds to glutamine 332–tyrosine 370. The helical transmembrane segment at histidine 371–isoleucine 391 threads the bilayer. The Cytoplasmic portion of the chain corresponds to lysine 392 to isoleucine 394.

Belongs to the major facilitator superfamily. Set transporter family.

It localises to the cell inner membrane. In terms of biological role, involved in the efflux of sugars. The physiological role may be the detoxification of non-metabolizable sugar analogs. This is Sugar efflux transporter C (setC) from Escherichia coli (strain K12).